The following is a 190-amino-acid chain: Anthranilate synthase component II (190 aa).

The 190-residue stretch at 1-190 folds into the Glutamine amidotransferase type-1 domain; it reads MILIIDNYDS…ENFCTGIAKA (190 aa). 51–53 provides a ligand contact to L-glutamine; the sequence is GPG. C76 acts as the Nucleophile; for GATase activity in catalysis. L-glutamine contacts are provided by residues Q80 and 126-127; that span reads SL. Active-site residues include H167 and E169.

Tetramer of two components I and two components II.

It carries out the reaction chorismate + L-glutamine = anthranilate + pyruvate + L-glutamate + H(+). It functions in the pathway amino-acid biosynthesis; L-tryptophan biosynthesis; L-tryptophan from chorismate: step 1/5. The protein is Anthranilate synthase component II (trpG2) of Haloarcula marismortui (strain ATCC 43049 / DSM 3752 / JCM 8966 / VKM B-1809) (Halobacterium marismortui).